The sequence spans 590 residues: Major surface protein MspTL (590 aa).

The signal sequence occupies residues 1 to 19 (MKKILAFFLVFALAGAVFA).

The protein resides in the cell outer membrane. Its function is as follows. Major component of the outer membrane. The chain is Major surface protein MspTL (mspTL) from Treponema lecithinolyticum.